The sequence spans 357 residues: Serpentine receptor class epsilon-31 (357 aa).

Transmembrane regions (helical) follow at residues 28 to 48 (VISI…NLSI), 61 to 81 (LMFL…GKFI), 121 to 141 (LLIF…FGIL), 165 to 185 (IPIF…FIVI), 192 to 212 (IIAR…WLFV), 253 to 273 (LVAV…SLTF), and 283 to 303 (FVEN…MFSI).

It belongs to the nematode receptor-like protein sre family.

It is found in the membrane. This is Serpentine receptor class epsilon-31 (sre-31) from Caenorhabditis elegans.